Consider the following 219-residue polypeptide: 3,4-dihydroxy-2-butanone 4-phosphate synthase (219 aa).

D-ribulose 5-phosphate is bound by residues 28-29 (RE), D33, 140-144 (REGHT), and E164. E29 contacts Mg(2+). A Mg(2+)-binding site is contributed by H143.

This sequence belongs to the DHBP synthase family. Homodimer. Mg(2+) is required as a cofactor. Requires Mn(2+) as cofactor.

The catalysed reaction is D-ribulose 5-phosphate = (2S)-2-hydroxy-3-oxobutyl phosphate + formate + H(+). It functions in the pathway cofactor biosynthesis; riboflavin biosynthesis; 2-hydroxy-3-oxobutyl phosphate from D-ribulose 5-phosphate: step 1/1. Catalyzes the conversion of D-ribulose 5-phosphate to formate and 3,4-dihydroxy-2-butanone 4-phosphate. The polypeptide is 3,4-dihydroxy-2-butanone 4-phosphate synthase (Methanocorpusculum labreanum (strain ATCC 43576 / DSM 4855 / Z)).